The chain runs to 154 residues: Putative pre-16S rRNA nuclease (154 aa).

The protein belongs to the YqgF nuclease family.

It is found in the cytoplasm. Functionally, could be a nuclease involved in processing of the 5'-end of pre-16S rRNA. This is Putative pre-16S rRNA nuclease from Rickettsia bellii (strain OSU 85-389).